The chain runs to 592 residues: Aspartate--tRNA ligase (592 aa).

Glu171 is a binding site for L-aspartate. An aspartate region spans residues 195–198; the sequence is QLFK. Arg217 contacts L-aspartate. ATP-binding positions include 217–219 and Gln226; that span reads RDE. His448 is a binding site for L-aspartate. Residue Glu482 coordinates ATP. Arg489 contributes to the L-aspartate binding site. Position 534–537 (534–537) interacts with ATP; the sequence is GLDR.

The protein belongs to the class-II aminoacyl-tRNA synthetase family. Type 1 subfamily. Homodimer.

The protein resides in the cytoplasm. It catalyses the reaction tRNA(Asp) + L-aspartate + ATP = L-aspartyl-tRNA(Asp) + AMP + diphosphate. Catalyzes the attachment of L-aspartate to tRNA(Asp) in a two-step reaction: L-aspartate is first activated by ATP to form Asp-AMP and then transferred to the acceptor end of tRNA(Asp). The sequence is that of Aspartate--tRNA ligase from Vibrio atlanticus (strain LGP32) (Vibrio splendidus (strain Mel32)).